Consider the following 627-residue polypeptide: Altered inheritance of mitochondria protein 9, mitochondrial (627 aa).

The transit peptide at 1–43 (MIRYTVAGHSRRCVVGASKRVGAIKCITVAATKRFISNKPNEV) directs the protein to the mitochondrion.

The protein belongs to the AIM9 family.

The protein resides in the mitochondrion. The protein is Altered inheritance of mitochondria protein 9, mitochondrial (AIM9) of Saccharomyces cerevisiae (strain YJM789) (Baker's yeast).